Consider the following 479-residue polypeptide: Aspartyl/glutamyl-tRNA(Asn/Gln) amidotransferase subunit B (479 aa).

Belongs to the GatB/GatE family. GatB subfamily. As to quaternary structure, heterotrimer of A, B and C subunits.

It catalyses the reaction L-glutamyl-tRNA(Gln) + L-glutamine + ATP + H2O = L-glutaminyl-tRNA(Gln) + L-glutamate + ADP + phosphate + H(+). The enzyme catalyses L-aspartyl-tRNA(Asn) + L-glutamine + ATP + H2O = L-asparaginyl-tRNA(Asn) + L-glutamate + ADP + phosphate + 2 H(+). Allows the formation of correctly charged Asn-tRNA(Asn) or Gln-tRNA(Gln) through the transamidation of misacylated Asp-tRNA(Asn) or Glu-tRNA(Gln) in organisms which lack either or both of asparaginyl-tRNA or glutaminyl-tRNA synthetases. The reaction takes place in the presence of glutamine and ATP through an activated phospho-Asp-tRNA(Asn) or phospho-Glu-tRNA(Gln). The polypeptide is Aspartyl/glutamyl-tRNA(Asn/Gln) amidotransferase subunit B (Myxococcus xanthus (strain DK1622)).